The primary structure comprises 84 residues: U8-theraphotoxin-Hhn1g (84 aa).

The first 21 residues, 1 to 21, serve as a signal peptide directing secretion; sequence MKVVLLVCLVWMMAMMELVSC. Cystine bridges form between Cys23–Cys35, Cys29–Cys44, Cys34–Cys67, Cys54–Cys75, and Cys69–Cys81.

Belongs to the AVIT (prokineticin) family. As to expression, expressed by the venom gland.

The protein localises to the secreted. This is U8-theraphotoxin-Hhn1g from Cyriopagopus hainanus (Chinese bird spider).